The chain runs to 728 residues: Phosphoribosylformylglycinamidine synthase subunit PurL (728 aa).

Residue His-40 is part of the active site. Residues Tyr-43 and Lys-82 each contribute to the ATP site. Mg(2+) is bound at residue Glu-84. Residues 85–88 (SHNH) and Arg-107 each bind substrate. The active-site Proton acceptor is the His-86. Asp-108 is a binding site for Mg(2+). Gln-231 serves as a coordination point for substrate. Asp-259 contributes to the Mg(2+) binding site. 303-305 (ESQ) contacts substrate. Residues Asn-483 and Gly-520 each contribute to the ATP site. Position 521 (Asn-521) interacts with Mg(2+). Ser-523 contributes to the substrate binding site.

Belongs to the FGAMS family. In terms of assembly, monomer. Part of the FGAM synthase complex composed of 1 PurL, 1 PurQ and 2 PurS subunits.

It is found in the cytoplasm. It carries out the reaction N(2)-formyl-N(1)-(5-phospho-beta-D-ribosyl)glycinamide + L-glutamine + ATP + H2O = 2-formamido-N(1)-(5-O-phospho-beta-D-ribosyl)acetamidine + L-glutamate + ADP + phosphate + H(+). The protein operates within purine metabolism; IMP biosynthesis via de novo pathway; 5-amino-1-(5-phospho-D-ribosyl)imidazole from N(2)-formyl-N(1)-(5-phospho-D-ribosyl)glycinamide: step 1/2. Part of the phosphoribosylformylglycinamidine synthase complex involved in the purines biosynthetic pathway. Catalyzes the ATP-dependent conversion of formylglycinamide ribonucleotide (FGAR) and glutamine to yield formylglycinamidine ribonucleotide (FGAM) and glutamate. The FGAM synthase complex is composed of three subunits. PurQ produces an ammonia molecule by converting glutamine to glutamate. PurL transfers the ammonia molecule to FGAR to form FGAM in an ATP-dependent manner. PurS interacts with PurQ and PurL and is thought to assist in the transfer of the ammonia molecule from PurQ to PurL. This Carboxydothermus hydrogenoformans (strain ATCC BAA-161 / DSM 6008 / Z-2901) protein is Phosphoribosylformylglycinamidine synthase subunit PurL.